Reading from the N-terminus, the 162-residue chain is Transcription elongation factor GreA (162 aa).

The stretch at N45 to L65 forms a coiled coil.

Belongs to the GreA/GreB family.

In terms of biological role, necessary for efficient RNA polymerase transcription elongation past template-encoded arresting sites. The arresting sites in DNA have the property of trapping a certain fraction of elongating RNA polymerases that pass through, resulting in locked ternary complexes. Cleavage of the nascent transcript by cleavage factors such as GreA or GreB allows the resumption of elongation from the new 3'terminus. GreA releases sequences of 2 to 3 nucleotides. This chain is Transcription elongation factor GreA, found in Wolinella succinogenes (strain ATCC 29543 / DSM 1740 / CCUG 13145 / JCM 31913 / LMG 7466 / NCTC 11488 / FDC 602W) (Vibrio succinogenes).